The following is a 105-amino-acid chain: Large ribosomal subunit protein uL24 (105 aa).

This sequence belongs to the universal ribosomal protein uL24 family. Part of the 50S ribosomal subunit.

Its function is as follows. One of two assembly initiator proteins, it binds directly to the 5'-end of the 23S rRNA, where it nucleates assembly of the 50S subunit. Functionally, one of the proteins that surrounds the polypeptide exit tunnel on the outside of the subunit. The polypeptide is Large ribosomal subunit protein uL24 (Staphylococcus aureus (strain Mu3 / ATCC 700698)).